The sequence spans 191 residues: Protein Ves (191 aa).

It belongs to the Ves family.

The polypeptide is Protein Ves (Escherichia coli (strain 55989 / EAEC)).